We begin with the raw amino-acid sequence, 521 residues long: Envelope glycoprotein C homolog (521 aa).

The signal sequence occupies residues 1–21; that stretch reads MGPLGRAWLIAAIFAWALLSA. Residues 22-475 are Virion surface-facing; it reads RRGLAEEAEA…DASPGLIGSP (454 aa). Residues 24 to 138 form a disordered region; sequence GLAEEAEASP…PSKAPPKERK (115 aa). A compositionally biased stretch (low complexity) spans 41–54; sequence PTETESSAGTTGAT. A compositionally biased stretch (polar residues) spans 66–76; that stretch reads EDSTPGATTPV. Residue N111 is glycosylated (N-linked (GlcNAc...) asparagine; by host). C142 and C159 are disulfide-bonded. An Ig-like V-type domain is found at 155-227; that stretch reads LYVHCGVADN…LGDNYIFPSP (73 aa). 2 N-linked (GlcNAc...) asparagine; by host glycosylation sites follow: N164 and N208. Cystine bridges form between C290–C351, C390–C447, and C394–C421. In terms of domain architecture, Ig-like C2-type spans 386–451; that stretch reads GEAVCEARCV…PVDYTCTATG (66 aa). Residues 476 to 496 traverse the membrane as a helical segment; that stretch reads VLVSVVAVACGLGAVGLLLVA. Residues 497 to 521 are Cytoplasmic-facing; it reads ASCLRRKARVIQPGLTRARALGSAP.

Belongs to the herpesviridae glycoprotein C family. In terms of assembly, interacts with host complement component C3; this interaction inhibits host immune response by disregulating complement cascade.

It localises to the virion membrane. In terms of biological role, essential for the initial attachment to heparan sulfate moieties of the host cell surface proteoglycans. Plays also a role in host immune evasion by inhibiting the host complement cascade activation. The sequence is that of Envelope glycoprotein C homolog (gC) from Bovine herpesvirus 1.1 (strain Cooper) (BoHV-1).